We begin with the raw amino-acid sequence, 494 residues long: Rhamnulokinase (494 aa).

18–22 serves as a coordination point for ATP; the sequence is ASSGR. Substrate contacts are provided by residues G87 and 242-244; that span reads HDT. The active-site Proton acceptor is D243. Position 265 (T265) interacts with ATP. N302 provides a ligand contact to substrate. Position 310 (Q310) interacts with ATP. C360 and C377 are oxidised to a cystine. Residue G411 participates in ATP binding.

This sequence belongs to the rhamnulokinase family. Requires Mg(2+) as cofactor.

It carries out the reaction L-rhamnulose + ATP = L-rhamnulose 1-phosphate + ADP + H(+). Its pathway is carbohydrate degradation; L-rhamnose degradation; glycerone phosphate from L-rhamnose: step 2/3. Functionally, involved in the catabolism of L-rhamnose (6-deoxy-L-mannose). Catalyzes the transfer of the gamma-phosphate group from ATP to the 1-hydroxyl group of L-rhamnulose to yield L-rhamnulose 1-phosphate. The chain is Rhamnulokinase from Enterococcus faecalis (strain ATCC 700802 / V583).